The sequence spans 219 residues: Adenylate kinase (219 aa).

10-15 (GAGKGT) contributes to the ATP binding site. The NMP stretch occupies residues 30 to 59 (STGDMLRAAVKAGTPLGQQAKKIMDEGGLV). AMP-binding positions include Thr31, Arg36, 57–59 (GLV), 85–88 (GFPR), and Gln92. Residues 122–159 (GRRVHPGSGRVYHVTHNPPRQEGKDDVTGEDLVQREDD) are LID. Residues Arg123 and 132-133 (VY) contribute to the ATP site. The interval 128–150 (GSGRVYHVTHNPPRQEGKDDVTG) is disordered. A compositionally biased stretch (basic and acidic residues) spans 140 to 150 (PRQEGKDDVTG). AMP contacts are provided by Arg156 and Arg167. Arg203 is an ATP binding site.

Belongs to the adenylate kinase family. As to quaternary structure, monomer.

The protein localises to the cytoplasm. The catalysed reaction is AMP + ATP = 2 ADP. The protein operates within purine metabolism; AMP biosynthesis via salvage pathway; AMP from ADP: step 1/1. Its function is as follows. Catalyzes the reversible transfer of the terminal phosphate group between ATP and AMP. Plays an important role in cellular energy homeostasis and in adenine nucleotide metabolism. The protein is Adenylate kinase of Halorhodospira halophila (strain DSM 244 / SL1) (Ectothiorhodospira halophila (strain DSM 244 / SL1)).